A 1163-amino-acid chain; its full sequence is Ankyrin repeat-containing protein F37A4.4 (1163 aa).

An ANK repeat occupies 856–885 (YGNTALHVATRRGYQNLVEILIKHGADRSF). One can recognise a BRCT domain in the interval 929-1025 (LCVPEKFPVS…KLIEKDCDYL (97 aa)).

The sequence is that of Ankyrin repeat-containing protein F37A4.4 from Caenorhabditis elegans.